The primary structure comprises 743 residues: Cytosolic neutral trehalase (743 aa).

Residues Asp-95, Asp-97, Asn-99, Gln-101, and Asp-106 each contribute to the Ca(2+) site. Substrate-binding positions include Arg-285, 292 to 293, Asn-329, 338 to 340, Glu-405, Arg-454, and Gly-457; these read WD and RSQ. Catalysis depends on proton donor/acceptor residues Asp-459 and Glu-664.

Belongs to the glycosyl hydrolase 37 family. Ca(2+) is required as a cofactor.

Its subcellular location is the cytoplasm. It catalyses the reaction alpha,alpha-trehalose + H2O = alpha-D-glucose + beta-D-glucose. Its pathway is carbohydrate degradation. In terms of biological role, hydrolyzes intracellular trehalose to glucose. The sequence is that of Cytosolic neutral trehalase from Beauveria bassiana (strain ARSEF 2860) (White muscardine disease fungus).